Reading from the N-terminus, the 105-residue chain is Urease subunit beta (105 aa).

This sequence belongs to the urease beta subunit family. Heterotrimer of UreA (gamma), UreB (beta) and UreC (alpha) subunits. Three heterotrimers associate to form the active enzyme.

It is found in the cytoplasm. The catalysed reaction is urea + 2 H2O + H(+) = hydrogencarbonate + 2 NH4(+). It functions in the pathway nitrogen metabolism; urea degradation; CO(2) and NH(3) from urea (urease route): step 1/1. This chain is Urease subunit beta, found in Marinomonas sp. (strain MWYL1).